We begin with the raw amino-acid sequence, 468 residues long: Siroheme synthase 3 (468 aa).

A precorrin-2 dehydrogenase /sirohydrochlorin ferrochelatase region spans residues methionine 1–alanine 204. Residues glutamate 22–valine 23 and proline 43–glutamate 44 contribute to the NAD(+) site. Residue serine 128 is modified to Phosphoserine. Residues glycine 216–alanine 468 are uroporphyrinogen-III C-methyltransferase. Proline 225 serves as a coordination point for S-adenosyl-L-methionine. Aspartate 248 (proton acceptor) is an active-site residue. The active-site Proton donor is the lysine 270. Residues glycine 301 to aspartate 303, isoleucine 306, threonine 331 to alanine 332, methionine 383, and glycine 412 each bind S-adenosyl-L-methionine.

The protein in the N-terminal section; belongs to the precorrin-2 dehydrogenase / sirohydrochlorin ferrochelatase family. This sequence in the C-terminal section; belongs to the precorrin methyltransferase family.

The enzyme catalyses uroporphyrinogen III + 2 S-adenosyl-L-methionine = precorrin-2 + 2 S-adenosyl-L-homocysteine + H(+). It catalyses the reaction precorrin-2 + NAD(+) = sirohydrochlorin + NADH + 2 H(+). The catalysed reaction is siroheme + 2 H(+) = sirohydrochlorin + Fe(2+). The protein operates within cofactor biosynthesis; adenosylcobalamin biosynthesis; precorrin-2 from uroporphyrinogen III: step 1/1. It participates in cofactor biosynthesis; adenosylcobalamin biosynthesis; sirohydrochlorin from precorrin-2: step 1/1. Its pathway is porphyrin-containing compound metabolism; siroheme biosynthesis; precorrin-2 from uroporphyrinogen III: step 1/1. It functions in the pathway porphyrin-containing compound metabolism; siroheme biosynthesis; siroheme from sirohydrochlorin: step 1/1. The protein operates within porphyrin-containing compound metabolism; siroheme biosynthesis; sirohydrochlorin from precorrin-2: step 1/1. In terms of biological role, multifunctional enzyme that catalyzes the SAM-dependent methylations of uroporphyrinogen III at position C-2 and C-7 to form precorrin-2 via precorrin-1. Then it catalyzes the NAD-dependent ring dehydrogenation of precorrin-2 to yield sirohydrochlorin. Finally, it catalyzes the ferrochelation of sirohydrochlorin to yield siroheme. The protein is Siroheme synthase 3 of Aeromonas hydrophila subsp. hydrophila (strain ATCC 7966 / DSM 30187 / BCRC 13018 / CCUG 14551 / JCM 1027 / KCTC 2358 / NCIMB 9240 / NCTC 8049).